The primary structure comprises 304 residues: Porphobilinogen deaminase (304 aa).

The residue at position 241 (Cys241) is an S-(dipyrrolylmethanemethyl)cysteine.

The protein belongs to the HMBS family. Monomer. Requires dipyrromethane as cofactor.

The enzyme catalyses 4 porphobilinogen + H2O = hydroxymethylbilane + 4 NH4(+). It functions in the pathway porphyrin-containing compound metabolism; protoporphyrin-IX biosynthesis; coproporphyrinogen-III from 5-aminolevulinate: step 2/4. Functionally, tetrapolymerization of the monopyrrole PBG into the hydroxymethylbilane pre-uroporphyrinogen in several discrete steps. The protein is Porphobilinogen deaminase of Vesicomyosocius okutanii subsp. Calyptogena okutanii (strain HA).